The chain runs to 139 residues: Holo-[acyl-carrier-protein] synthase (139 aa).

Mg(2+) contacts are provided by aspartate 8 and glutamate 61.

This sequence belongs to the P-Pant transferase superfamily. AcpS family. Mg(2+) is required as a cofactor.

The protein resides in the cytoplasm. It carries out the reaction apo-[ACP] + CoA = holo-[ACP] + adenosine 3',5'-bisphosphate + H(+). Its function is as follows. Transfers the 4'-phosphopantetheine moiety from coenzyme A to a Ser of acyl-carrier-protein. This is Holo-[acyl-carrier-protein] synthase from Bradyrhizobium diazoefficiens (strain JCM 10833 / BCRC 13528 / IAM 13628 / NBRC 14792 / USDA 110).